We begin with the raw amino-acid sequence, 284 residues long: Probable palmitoyltransferase ZDHHC24 (284 aa).

Residues 1–18 (MGQPWAAGSTDGAPAQLP) lie on the Cytoplasmic side of the membrane. Residues 19–39 (LVLTALWAAAVGLELAYVLVL) traverse the membrane as a helical segment. Topologically, residues 40-52 (GPGPPPLGPLARA) are extracellular. Residues 53–73 (LQLALAAFQLLNLLGNVGLFL) traverse the membrane as a helical segment. Topologically, residues 74–137 (RSDPSIRGVM…GRCVGFGNYR (64 aa)) are cytoplasmic. Residues 94-144 (AYCYQCQSQVPPRSGHCSACRVCILRRDHHCRLLGRCVGFGNYRPFLCLLL) enclose the DHHC domain. The active-site S-palmitoyl cysteine intermediate is the C124. A helical transmembrane segment spans residues 138 to 158 (PFLCLLLHAAGVLLHVSVLLG). Over 159–166 (PALSALLR) the chain is Extracellular. A helical transmembrane segment spans residues 167-187 (AHTPLHMAALLLLPWLMLLTG). The Cytoplasmic portion of the chain corresponds to 188–201 (RVSLAQFALAFVTD). Residues 202–222 (TCVAGALLCGAGLLFHGMLLL) traverse the membrane as a helical segment. Topologically, residues 223–284 (RGQTTWEWAR…TTADVGHTAS (62 aa)) are extracellular.

This sequence belongs to the DHHC palmitoyltransferase family.

It is found in the membrane. The catalysed reaction is L-cysteinyl-[protein] + hexadecanoyl-CoA = S-hexadecanoyl-L-cysteinyl-[protein] + CoA. Probable palmitoyltransferase that could catalyze the addition of palmitate onto various protein substrates. The polypeptide is Probable palmitoyltransferase ZDHHC24 (Homo sapiens (Human)).